We begin with the raw amino-acid sequence, 459 residues long: MSNRFAVILAAGKGTRMKSKLYKVLHPVCGKPMVQHVVDQVSQLGLQKLVTVVGHGAEMVQEQLGNVSEFALQAEQLGTAHAVDQAAGVLANEEGTTLVICGDTPLITAETMEALLQQHKEAGAMATVLTAYIEEPAGYGRIVRNENGHVEKIVEHKDANEKELAIKEINTGTYCFDNKALFASLSKVSNDNVQGEYYLPDVIEILKNEGHIVSAYQTEHFDETLGVNDRVALSQAEIIMKNRINRKNMVNGVTIIDPSNTYISADAIIGSDTVLHPGTIIEGNTVIGSDCEIGPHTVIRDSEIGDRTIIRQSTVHDSKLGTEVSVGPFAHIRPDSVIGDEVRVGNFVEIKKTVFGNRSKASHLSYIGDAQVGEDVNLGCGSITVNYDGKNKFKTVIGNGVFIGCNSNLVAPVTVEDGAYVAAGSTITENVPSKALSVARARQVNKEDYVDQLLNKKKS.

Positions 1 to 230 are pyrophosphorylase; it reads MSNRFAVILA…FDETLGVNDR (230 aa). UDP-N-acetyl-alpha-D-glucosamine is bound by residues 9–12, lysine 23, glutamine 73, and 78–79; these read LAAG and GT. Aspartate 103 is a binding site for Mg(2+). UDP-N-acetyl-alpha-D-glucosamine-binding residues include glycine 140, glutamate 155, asparagine 170, and asparagine 228. Asparagine 228 is a binding site for Mg(2+). Positions 231-251 are linker; the sequence is VALSQAEIIMKNRINRKNMVN. The segment at 252 to 459 is N-acetyltransferase; sequence GVTIIDPSNT…VDQLLNKKKS (208 aa). 2 residues coordinate UDP-N-acetyl-alpha-D-glucosamine: arginine 333 and lysine 351. Histidine 363 serves as the catalytic Proton acceptor. Tyrosine 366 and asparagine 377 together coordinate UDP-N-acetyl-alpha-D-glucosamine. Acetyl-CoA-binding positions include 386 to 387, alanine 423, and arginine 440; that span reads NY.

The protein in the N-terminal section; belongs to the N-acetylglucosamine-1-phosphate uridyltransferase family. It in the C-terminal section; belongs to the transferase hexapeptide repeat family. In terms of assembly, homotrimer. Mg(2+) serves as cofactor.

The protein localises to the cytoplasm. It catalyses the reaction alpha-D-glucosamine 1-phosphate + acetyl-CoA = N-acetyl-alpha-D-glucosamine 1-phosphate + CoA + H(+). It carries out the reaction N-acetyl-alpha-D-glucosamine 1-phosphate + UTP + H(+) = UDP-N-acetyl-alpha-D-glucosamine + diphosphate. It functions in the pathway nucleotide-sugar biosynthesis; UDP-N-acetyl-alpha-D-glucosamine biosynthesis; N-acetyl-alpha-D-glucosamine 1-phosphate from alpha-D-glucosamine 6-phosphate (route II): step 2/2. Its pathway is nucleotide-sugar biosynthesis; UDP-N-acetyl-alpha-D-glucosamine biosynthesis; UDP-N-acetyl-alpha-D-glucosamine from N-acetyl-alpha-D-glucosamine 1-phosphate: step 1/1. The protein operates within bacterial outer membrane biogenesis; LPS lipid A biosynthesis. Its function is as follows. Catalyzes the last two sequential reactions in the de novo biosynthetic pathway for UDP-N-acetylglucosamine (UDP-GlcNAc). The C-terminal domain catalyzes the transfer of acetyl group from acetyl coenzyme A to glucosamine-1-phosphate (GlcN-1-P) to produce N-acetylglucosamine-1-phosphate (GlcNAc-1-P), which is converted into UDP-GlcNAc by the transfer of uridine 5-monophosphate (from uridine 5-triphosphate), a reaction catalyzed by the N-terminal domain. The chain is Bifunctional protein GlmU from Bacillus thuringiensis subsp. konkukian (strain 97-27).